A 703-amino-acid chain; its full sequence is Ion-translocating oxidoreductase complex subunit C (703 aa).

4Fe-4S ferredoxin-type domains follow at residues 369-398 (YDPQ…QQMY) and 408-437 (KSNQ…IQYF). 8 residues coordinate [4Fe-4S] cluster: Cys-378, Cys-381, Cys-384, Cys-388, Cys-417, Cys-420, Cys-423, and Cys-427. 2 disordered regions span residues 467 to 542 (RLER…PDNS) and 555 to 680 (RQQT…PKKA). Residues 485–497 (ARREELAANKGED) are compositionally biased toward basic and acidic residues. The segment covering 559–577 (NGNSPVSSASNSDSATISA) has biased composition (low complexity). Residues 578–592 (DNTHSTPKTAQNQTA) show a composition bias toward polar residues. Composition is skewed to low complexity over residues 598–629 (AAVA…TEKT) and 641–669 (AAVA…EKTA).

The protein belongs to the 4Fe4S bacterial-type ferredoxin family. RnfC subfamily. As to quaternary structure, the complex is composed of six subunits: RnfA, RnfB, RnfC, RnfD, RnfE and RnfG. Requires [4Fe-4S] cluster as cofactor.

It is found in the cell inner membrane. Functionally, part of a membrane-bound complex that couples electron transfer with translocation of ions across the membrane. The sequence is that of Ion-translocating oxidoreductase complex subunit C from Actinobacillus succinogenes (strain ATCC 55618 / DSM 22257 / CCUG 43843 / 130Z).